The following is a 380-amino-acid chain: Putative 8-amino-7-oxononanoate synthase (380 aa).

R22 contributes to the substrate binding site. 109-110 (GY) contributes to the pyridoxal 5'-phosphate binding site. Residue H134 coordinates substrate. Pyridoxal 5'-phosphate-binding positions include S182, 207–210 (DEAH), and 238–241 (TLSK). Residue K241 is modified to N6-(pyridoxal phosphate)lysine. T353 contacts substrate.

This sequence belongs to the class-II pyridoxal-phosphate-dependent aminotransferase family. BioF subfamily. In terms of assembly, homodimer. The cofactor is pyridoxal 5'-phosphate.

The catalysed reaction is 6-carboxyhexanoyl-[ACP] + L-alanine + H(+) = (8S)-8-amino-7-oxononanoate + holo-[ACP] + CO2. It functions in the pathway cofactor biosynthesis; biotin biosynthesis. Its function is as follows. Catalyzes the decarboxylative condensation of pimeloyl-[acyl-carrier protein] and L-alanine to produce 8-amino-7-oxononanoate (AON), [acyl-carrier protein], and carbon dioxide. This is Putative 8-amino-7-oxononanoate synthase (bioF) from Gloeothece citriformis (strain PCC 7424) (Cyanothece sp. (strain PCC 7424)).